The primary structure comprises 423 residues: G-protein coupled receptor 83 (423 aa).

An N-terminal signal peptide occupies residues 1–16; the sequence is MVPHLLLLCLLPLVRA. The Extracellular segment spans residues 18 to 71; that stretch reads EPHEGRADEQSAEAALAVPNASHFFSWNNYTFSDWQNFVGRRRYGAESQNPTVK. N-linked (GlcNAc...) asparagine glycans are attached at residues Asn37 and Asn46. A helical transmembrane segment spans residues 72 to 92; the sequence is ALLIVAYSFIIVFSLFGNVLV. Topologically, residues 93–107 are cytoplasmic; that stretch reads CHVIFKNQRMHSATS. A helical transmembrane segment spans residues 108–129; sequence LFIVNLAVADIMITLLNTPFTL. Topologically, residues 130-145 are extracellular; the sequence is VRFVNSTWIFGKGMCH. A glycan (N-linked (GlcNAc...) asparagine) is linked at Asn134. Cys144 and Cys224 are disulfide-bonded. A helical membrane pass occupies residues 146-167; sequence VSRFAQYCSLHVSALTLTAIAV. Topologically, residues 168-186 are cytoplasmic; sequence DRHQVIMHPLKPRISITKG. A helical membrane pass occupies residues 187–208; that stretch reads VIYIAVIWTMATFFSLPHAICQ. Residues 209 to 238 are Extracellular-facing; that stretch reads KLFTFKYSEDIVRSLCLPDFPEPADLFWKY. Residues 239–260 form a helical membrane-spanning segment; that stretch reads LDLATFILLYILPLLIISVAYA. Over 261 to 293 the chain is Cytoplasmic; that stretch reads RVAKKLWLCNMIGDVTTEQYFALRRKKKKTIKM. The chain crosses the membrane as a helical span at residues 294 to 315; the sequence is LMLVVVLFALCWFPLNCYVLLL. The Extracellular portion of the chain corresponds to 316–327; that stretch reads SSKVIRTNNALY. Residues 328–348 traverse the membrane as a helical segment; that stretch reads FAFHWFAMSSTCYNPFIYCWL. Residues 349–423 are Cytoplasmic-facing; the sequence is NENFRIELKA…SSVEPIVTMS (75 aa). Positions 402-414 are enriched in polar residues; it reads PTSQLQSGKTDLS. Residues 402–423 are disordered; the sequence is PTSQLQSGKTDLSSVEPIVTMS.

Belongs to the G-protein coupled receptor 1 family. In terms of tissue distribution, highly expressed in the brain and spinal cord, and found in lower concentrations in the thymus and other tissues.

The protein localises to the cell membrane. Functionally, G-protein coupled receptor for PEN, a neuropeptide produced from the precursor protein, proSAAS (encoded by PCSK1N). Acts through a G(i)- and G(q)-alpha-alpha-mediated pathway in response to PEN. Plays a role in food intake and body weight regulation. May contribute to the regulation of anxiety-related behaviors. This Homo sapiens (Human) protein is G-protein coupled receptor 83.